The chain runs to 374 residues: Methylthioribose-1-phosphate isomerase (374 aa).

D251 (proton donor) is an active-site residue.

It belongs to the eIF-2B alpha/beta/delta subunits family. MtnA subfamily.

The protein resides in the cytoplasm. It localises to the nucleus. It carries out the reaction 5-(methylsulfanyl)-alpha-D-ribose 1-phosphate = 5-(methylsulfanyl)-D-ribulose 1-phosphate. It participates in amino-acid biosynthesis; L-methionine biosynthesis via salvage pathway; L-methionine from S-methyl-5-thio-alpha-D-ribose 1-phosphate: step 1/6. In terms of biological role, catalyzes the interconversion of methylthioribose-1-phosphate (MTR-1-P) into methylthioribulose-1-phosphate (MTRu-1-P). The polypeptide is Methylthioribose-1-phosphate isomerase (IDI2) (Oryza sativa subsp. japonica (Rice)).